The chain runs to 595 residues: DNA damage-binding protein CMR1 (595 aa).

A disordered region spans residues 20–79; it reads ALLDSLGLDPAGASSPFGSSPAPTSNKTKPKPKPAPKKRKAAAVIAVDEGPRRRSGRIAG. Over residues 29 to 46 the composition is skewed to low complexity; that stretch reads PAGASSPFGSSPAPTSNK. Residues 47-60 show a composition bias toward basic residues; sequence TKPKPKPAPKKRKA. WD repeat units lie at residues 185-226, 255-297, 300-339, and 349-389; these read VTNE…MEKP, HAKN…ELFS, DEDLLINHFDLLPSAQEAWMVDKNGGISHWDTRESKRESG, and GRGA…SISS. The disordered stretch occupies residues 397–429; it reads AIEEEEEGTSTLSGQSSSLPHDTHPTRESDYST. Residues 405–415 are compositionally biased toward low complexity; sequence TSTLSGQSSSL. Over residues 417–426 the composition is skewed to basic and acidic residues; the sequence is HDTHPTRESD. WD repeat units lie at residues 448-487, 519-556, and 558-595; these read QHGKSCSSAYWDPWGRRILTTSYDDHLRVFNIDPGSSLVD, LRAQWSLNMEYMPHFTVGNMKRTLDVVSATGEKIVGLW, and DDVTAVPTVTASHPNIVDRVVGGNTSGRIQLWSSGDHI.

It belongs to the WD repeat DDB2/WDR76 family.

Its function is as follows. DNA-binding protein that binds to both single- and double-stranded DNA. Binds preferentially to UV-damaged DNA. May be involved in DNA-metabolic processes. In Cryptococcus neoformans var. neoformans serotype D (strain B-3501A) (Filobasidiella neoformans), this protein is DNA damage-binding protein CMR1.